Reading from the N-terminus, the 280-residue chain is MKILLDSLPFIRIFRGQIIVIKYGGAAQINPQLKEKFALDIVIMYMLGLKPVIIHGGGKRINEMLDIMGIESEFYNGYRITSAECMRVVEMVLSGEINKELTAFLNFHGAKAVGMSGKDAHLLQAKAKDNGALGYTGEITAVNPSFLLNVINDGFVPIIAPIATGEGAGHLGYNINADIAACHIAKALSAKKIIFLSDIAGVLDSNKEPISSLTPSDIKQLQKQGVINGGMIPKLEACVDCVQNGVEKAHIIDGRIEHSLLLELFTTQGIGTEIYNGQDK.

Residues 57-58 (GG), arginine 79, and asparagine 174 contribute to the substrate site.

The protein belongs to the acetylglutamate kinase family. ArgB subfamily.

It is found in the cytoplasm. It carries out the reaction N-acetyl-L-glutamate + ATP = N-acetyl-L-glutamyl 5-phosphate + ADP. Its pathway is amino-acid biosynthesis; L-arginine biosynthesis; N(2)-acetyl-L-ornithine from L-glutamate: step 2/4. Catalyzes the ATP-dependent phosphorylation of N-acetyl-L-glutamate. The chain is Acetylglutamate kinase from Helicobacter hepaticus (strain ATCC 51449 / 3B1).